The sequence spans 539 residues: Chaperonin GroEL 2 (539 aa).

ATP is bound by residues 29–32 (TIGP), 86–90 (DGTTT), Gly414, 479–481 (DAL), and Asp495.

It belongs to the chaperonin (HSP60) family. Forms a cylinder of 14 subunits composed of two heptameric rings stacked back-to-back. Interacts with the co-chaperonin GroES.

Its subcellular location is the cytoplasm. It catalyses the reaction ATP + H2O + a folded polypeptide = ADP + phosphate + an unfolded polypeptide.. In terms of biological role, together with its co-chaperonin GroES, plays an essential role in assisting protein folding. The GroEL-GroES system forms a nano-cage that allows encapsulation of the non-native substrate proteins and provides a physical environment optimized to promote and accelerate protein folding. The sequence is that of Chaperonin GroEL 2 from Synechococcus sp. (strain JA-2-3B'a(2-13)) (Cyanobacteria bacterium Yellowstone B-Prime).